Consider the following 241-residue polypeptide: Uracil-DNA glycosylase (241 aa).

Asp68 acts as the Proton acceptor in catalysis.

The protein belongs to the uracil-DNA glycosylase (UDG) superfamily. UNG family.

It localises to the cytoplasm. It carries out the reaction Hydrolyzes single-stranded DNA or mismatched double-stranded DNA and polynucleotides, releasing free uracil.. In terms of biological role, excises uracil residues from the DNA which can arise as a result of misincorporation of dUMP residues by DNA polymerase or due to deamination of cytosine. This Sinorhizobium medicae (strain WSM419) (Ensifer medicae) protein is Uracil-DNA glycosylase.